Reading from the N-terminus, the 211-residue chain is Large ribosomal subunit protein bL25 (211 aa).

This sequence belongs to the bacterial ribosomal protein bL25 family. CTC subfamily. Part of the 50S ribosomal subunit; part of the 5S rRNA/L5/L18/L25 subcomplex. Contacts the 5S rRNA. Binds to the 5S rRNA independently of L5 and L18.

This is one of the proteins that binds to the 5S RNA in the ribosome where it forms part of the central protuberance. The sequence is that of Large ribosomal subunit protein bL25 from Anaplasma phagocytophilum (strain HZ).